The sequence spans 276 residues: Rhamnulose-1-phosphate aldolase (276 aa).

Glu117 is a catalytic residue. His141, His143, and His212 together coordinate Zn(2+).

Belongs to the aldolase class II family. RhaD subfamily. As to quaternary structure, homotetramer. Requires Zn(2+) as cofactor.

Its subcellular location is the cytoplasm. The catalysed reaction is L-rhamnulose 1-phosphate = (S)-lactaldehyde + dihydroxyacetone phosphate. It participates in carbohydrate degradation; L-rhamnose degradation; glycerone phosphate from L-rhamnose: step 3/3. Its function is as follows. Catalyzes the reversible cleavage of L-rhamnulose-1-phosphate to dihydroxyacetone phosphate (DHAP) and L-lactaldehyde. The polypeptide is Rhamnulose-1-phosphate aldolase (Enterobacter sp. (strain 638)).